Consider the following 377-residue polypeptide: tRNA-specific 2-thiouridylase MnmA (377 aa).

ATP-binding positions include 9–16 (AMSGGVDS) and leucine 35. Catalysis depends on cysteine 105, which acts as the Nucleophile. A disulfide bridge connects residues cysteine 105 and cysteine 201. Residue glycine 129 participates in ATP binding. The interval 151-153 (KNQ) is interaction with tRNA. The Cysteine persulfide intermediate role is filled by cysteine 201. Residues 307–308 (RY) are interaction with tRNA.

It belongs to the MnmA/TRMU family.

Its subcellular location is the cytoplasm. It carries out the reaction S-sulfanyl-L-cysteinyl-[protein] + uridine(34) in tRNA + AH2 + ATP = 2-thiouridine(34) in tRNA + L-cysteinyl-[protein] + A + AMP + diphosphate + H(+). Functionally, catalyzes the 2-thiolation of uridine at the wobble position (U34) of tRNA, leading to the formation of s(2)U34. This is tRNA-specific 2-thiouridylase MnmA from Leptospira borgpetersenii serovar Hardjo-bovis (strain JB197).